A 203-amino-acid chain; its full sequence is dITP/XTP pyrophosphatase (203 aa).

8 to 13 lines the substrate pocket; sequence TANKGK. E41 and D70 together coordinate Mg(2+). The Proton acceptor role is filled by D70. Substrate contacts are provided by residues S71, 153-156, K176, and 181-182; these read FGYD and HR.

This sequence belongs to the HAM1 NTPase family. In terms of assembly, homodimer. It depends on Mg(2+) as a cofactor.

It carries out the reaction XTP + H2O = XMP + diphosphate + H(+). The enzyme catalyses dITP + H2O = dIMP + diphosphate + H(+). The catalysed reaction is ITP + H2O = IMP + diphosphate + H(+). Its function is as follows. Pyrophosphatase that catalyzes the hydrolysis of nucleoside triphosphates to their monophosphate derivatives, with a high preference for the non-canonical purine nucleotides XTP (xanthosine triphosphate), dITP (deoxyinosine triphosphate) and ITP. Seems to function as a house-cleaning enzyme that removes non-canonical purine nucleotides from the nucleotide pool, thus preventing their incorporation into DNA/RNA and avoiding chromosomal lesions. The chain is dITP/XTP pyrophosphatase from Listeria innocua serovar 6a (strain ATCC BAA-680 / CLIP 11262).